The chain runs to 61 residues: Metallothionein-1F (61 aa).

Position 1 is an N-acetylmethionine (methionine 1). Residues 1–29 (MDPNCSCPTGGSCTCAGSCTCKACRCTSC) form a beta region. A divalent metal cation contacts are provided by cysteine 5, cysteine 7, cysteine 13, cysteine 15, cysteine 19, cysteine 21, cysteine 24, cysteine 26, cysteine 29, cysteine 33, cysteine 34, cysteine 36, cysteine 37, cysteine 41, cysteine 44, cysteine 48, cysteine 50, and cysteine 57. The tract at residues 30 to 61 (KKSCCSCCPAGCAKCAQGCICKGASDKCSCCA) is alpha. A Phosphoserine modification is found at serine 58. Residues cysteine 59 and cysteine 60 each contribute to the a divalent metal cation site.

The protein belongs to the metallothionein superfamily. Type 1 family. Monomer.

Its function is as follows. Metallothioneins have a high content of cysteine residues that bind various heavy metals; these proteins are transcriptionally regulated by both heavy metals and glucocorticoids. The polypeptide is Metallothionein-1F (MT1F) (Sus scrofa (Pig)).